The primary structure comprises 35 residues: Conotoxin Cal6.1f (35 aa).

Positions 1–8 are excised as a propeptide; the sequence is GLIRPSKR. Intrachain disulfides connect Cys9–Cys25, Cys16–Cys29, and Cys24–Cys34.

It belongs to the conotoxin O1 superfamily. In terms of tissue distribution, expressed by the venom duct.

It is found in the secreted. In terms of biological role, probable neurotoxin with unknown target. Possibly targets ion channels. The protein is Conotoxin Cal6.1f of Californiconus californicus (California cone).